We begin with the raw amino-acid sequence, 933 residues long: MEDRETHLGTREVNETSPDLLKNTPSNIARLEDVIEQCHGRQKYLAQTRSPSDGSDVRWYFCKVPLAENELAASVPRTDVVGKSEYFRFGMRDSLAIEASFLQREDELLSLWWKEYAECSEGPKLQVNSKKKSIETPSEASVSSSLYEVEEERVGVPVKGGLYEVDLVRRHCFPVYWNGDNRRVLRGHWFARKGGLDWLPIPETVSEQLEVAYRNKVWRRRSFQPSGLFAARIDLQGSSLGLHALFTGEDDTWEAWLNVDPSGFSGIVGYTGNGIKLRRGYAGSYSPKPTQEELRQQKEEEMDDYCSQVPVRHLVFMVHGIGQKGEKSNLVDDVGNFRQITAALAERHLTSHQLSTQRVLFIPCQWRKGLKLSGEAAVDKCTLDGVRRFREMLSATVHDVLYYMSPIYCQAIIDSVSKQLNRLYLKFLKRNPDYVGKISIYGHSLGSVLSYDILCHQHNLSSPFPMDSVYKKFFPDEESPPTPAKADKPCSSHPSSNFEPEKSDQLNNPEKITGQDNNTMAKEPTVLEHHDVIQEDPSLISDSVVANVGLERRGGQEDDHHDSSGAISSQDVPDGADCRTPDSPSCSQEQSWDKESVNSNNEERIKLLQDEVNSLRSKVAQLLSENARILSDEKAKTSVAPKELNNEKVQTEDADAPTSFTPFIKYQKLEFKVDTFFAVGSPLGVFLALRNIRLGIGKGKDYWEEENAIEEMPACRRMFNIFHPYDPVAYRVEPLVCKEYLPERPVIIPYHRGGKRLHIGLQDFREDFAARSQRIMNHFDSVRTRVLTICQSKSADNLDEMEETDDEKDDRSYGSLMIERLTGTRDGRIDHMLQEKTFEHPYLQAIGAHTNYWRDQDTALFIIKHLYRELPDGPNSPTESTEGDDSPKDSSRPHSWIDRREADYDDEELPLTFSDKQITRSFSAEAKKYLKKP.

Residues 1-14 (MEDRETHLGTREVN) are compositionally biased toward basic and acidic residues. The tract at residues 1–22 (MEDRETHLGTREVNETSPDLLK) is disordered. Ser444 is a catalytic residue. Disordered stretches follow at residues 475–517 (PDEE…GQDN) and 553–598 (RGGQ…ESVN). Residues 505–517 (QLNNPEKITGQDN) show a composition bias toward polar residues. Residues 553–563 (RGGQEDDHHDS) show a composition bias toward basic and acidic residues. The stretch at 593-631 (DKESVNSNNEERIKLLQDEVNSLRSKVAQLLSENARILS) forms a coiled coil. In terms of domain architecture, DDHD spans 669 to 868 (LEFKVDTFFA…ALFIIKHLYR (200 aa)). Residues 871–903 (PDGPNSPTESTEGDDSPKDSSRPHSWIDRREAD) are disordered. Over residues 885–902 (DSPKDSSRPHSWIDRREA) the composition is skewed to basic and acidic residues.

In terms of assembly, forms oligomers. In terms of tissue distribution, expressed in roots, hypocotyls, leaves, stems and floral buds, and, at low levels, in siliques.

Its subcellular location is the vacuole membrane. In terms of biological role, involved in vacuolar formation or function (e.g. formation of vacuolar membrane 'bulbs'). Required for amyloplast sedimentation in the endodermis during shoot gravitropism, which are thus acting as statoliths. Particularly important for the negative gravitropism leading to leaf movement observed in darkness. This chain is Phospholipase SGR2 (SGR2), found in Arabidopsis thaliana (Mouse-ear cress).